A 377-amino-acid polypeptide reads, in one-letter code: Glutamate 5-kinase (377 aa).

K20 lines the ATP pocket. Substrate contacts are provided by S60, D147, and N159. 179-180 (TD) is a binding site for ATP. A PUA domain is found at 285–363 (AGRLVIDAGA…DKVHQVLGEA (79 aa)).

The protein belongs to the glutamate 5-kinase family.

The protein resides in the cytoplasm. It carries out the reaction L-glutamate + ATP = L-glutamyl 5-phosphate + ADP. Its pathway is amino-acid biosynthesis; L-proline biosynthesis; L-glutamate 5-semialdehyde from L-glutamate: step 1/2. Catalyzes the transfer of a phosphate group to glutamate to form L-glutamate 5-phosphate. This Acinetobacter baylyi (strain ATCC 33305 / BD413 / ADP1) protein is Glutamate 5-kinase.